Consider the following 91-residue polypeptide: UPF0147 protein DKAM_0139 (91 aa).

It belongs to the UPF0147 family.

The sequence is that of UPF0147 protein DKAM_0139 from Desulfurococcus amylolyticus (strain DSM 18924 / JCM 16383 / VKM B-2413 / 1221n) (Desulfurococcus kamchatkensis).